Reading from the N-terminus, the 837-residue chain is Protein TRANSPARENT TESTA 9 (837 aa).

The FPL domain maps to 42 to 192 (LRSIAEILTY…AVRALTLNVY (151 aa)). The interval 366–386 (TEEANQQCSSTAAGMSDDGNS) is disordered. A compositionally biased stretch (polar residues) spans 368-378 (EANQQCSSTAA).

This sequence belongs to the CLEC16A/gop-1 family.

It localises to the golgi apparatus membrane. In terms of biological role, involved in membrane trafficking and vacuole development through membrane fusion at the vacuole. Required for membrane trafficking machinery and accumulation of flavonoids in the seed coat. This is Protein TRANSPARENT TESTA 9 from Arabidopsis thaliana (Mouse-ear cress).